Consider the following 215-residue polypeptide: Mite allergen Der p 7 (215 aa).

The first 17 residues, 1 to 17, serve as a signal peptide directing secretion; that stretch reads MMKLLLIAAAAFVAVSA. N-linked (GlcNAc...) asparagine glycosylation is present at asparagine 151.

Belongs to the mite group 7 allergen family.

It localises to the secreted. The polypeptide is Mite allergen Der p 7 (DERP7) (Dermatophagoides pteronyssinus (European house dust mite)).